We begin with the raw amino-acid sequence, 189 residues long: Large ribosomal subunit protein bL9 (189 aa).

It belongs to the bacterial ribosomal protein bL9 family.

Functionally, binds to the 23S rRNA. This Cereibacter sphaeroides (strain KD131 / KCTC 12085) (Rhodobacter sphaeroides) protein is Large ribosomal subunit protein bL9.